Here is a 496-residue protein sequence, read N- to C-terminus: Genome polyprotein (496 aa).

Residues 1-447 (SRCTHLENRD…HTVLGGAFNS (447 aa)) lie on the Extracellular side of the membrane. Intrachain disulfides connect Cys-3–Cys-30, Cys-60–Cys-116, Cys-60–Cys-121, Cys-74–Cys-105, Cys-92–Cys-116, and Cys-92–Cys-121. Residues 98–111 (DRGWGNHCGLFGKG) form a fusion peptide region. A glycan (N-linked (GlcNAc...) asparagine; by host) is linked at Asn-154. 2 disulfide bridges follow: Cys-186–Cys-290 and Cys-307–Cys-338. A helical transmembrane segment spans residues 448 to 468 (IFGGVGFLPKLLMGVALAWLG). The Cytoplasmic portion of the chain corresponds to 469-479 (LNTRNPTMSMS). Residues 480–496 (FLLAGGLVLAMTLGVGA) form a helical membrane-spanning segment.

As to quaternary structure, homodimer; in the endoplasmic reticulum and Golgi. Post-translationally, N-glycosylated.

Its subcellular location is the virion membrane. The protein localises to the host endoplasmic reticulum membrane. In terms of biological role, binds to host cell surface receptor and mediates fusion between viral and cellular membranes. Envelope protein is synthesized in the endoplasmic reticulum in the form of heterodimer with protein prM. They play a role in virion budding in the ER, and the newly formed immature particle is covered with 60 spikes composed of heterodimer between precursor prM and envelope protein E. The virion is transported to the Golgi apparatus where the low pH causes dissociation of PrM-E heterodimers and formation of E homodimers. prM-E cleavage is ineficient, and many virions are only partially matured. These uncleaved prM would play a role in immune evasion. The protein is Genome polyprotein of Bos taurus (Bovine).